We begin with the raw amino-acid sequence, 258 residues long: Regulatory protein RecX (258 aa).

The protein belongs to the RecX family.

The protein localises to the cytoplasm. Its function is as follows. Modulates RecA activity. This is Regulatory protein RecX from Streptococcus pneumoniae (strain P1031).